Reading from the N-terminus, the 354-residue chain is Uroporphyrinogen decarboxylase (354 aa).

Residues 27–31 (RQAGR), aspartate 77, tyrosine 154, threonine 209, and histidine 327 contribute to the substrate site.

Belongs to the uroporphyrinogen decarboxylase family. As to quaternary structure, homodimer.

It localises to the cytoplasm. It carries out the reaction uroporphyrinogen III + 4 H(+) = coproporphyrinogen III + 4 CO2. It functions in the pathway porphyrin-containing compound metabolism; protoporphyrin-IX biosynthesis; coproporphyrinogen-III from 5-aminolevulinate: step 4/4. Catalyzes the decarboxylation of four acetate groups of uroporphyrinogen-III to yield coproporphyrinogen-III. The protein is Uroporphyrinogen decarboxylase of Salmonella newport (strain SL254).